We begin with the raw amino-acid sequence, 669 residues long: DNA ligase (669 aa).

35-39 serves as a coordination point for NAD(+); that stretch reads DFEYD. Residues 52-71 are disordered; the sequence is YPEWDSPDSPTHRVGSDKTE. The segment covering 61-71 has biased composition (basic and acidic residues); it reads PTHRVGSDKTE. NAD(+) contacts are provided by residues 84–85 and Glu115; that span reads SL. Lys117 acts as the N6-AMP-lysine intermediate in catalysis. Residues Arg138, Glu175, Lys290, and Lys314 each contribute to the NAD(+) site. 4 residues coordinate Zn(2+): Cys408, Cys411, Cys426, and Cys432. One can recognise a BRCT domain in the interval 590–669; it reads PVSARLAGKT…EEEFLRLIEE (80 aa).

This sequence belongs to the NAD-dependent DNA ligase family. LigA subfamily. Mg(2+) is required as a cofactor. Requires Mn(2+) as cofactor.

The enzyme catalyses NAD(+) + (deoxyribonucleotide)n-3'-hydroxyl + 5'-phospho-(deoxyribonucleotide)m = (deoxyribonucleotide)n+m + AMP + beta-nicotinamide D-nucleotide.. Functionally, DNA ligase that catalyzes the formation of phosphodiester linkages between 5'-phosphoryl and 3'-hydroxyl groups in double-stranded DNA using NAD as a coenzyme and as the energy source for the reaction. It is essential for DNA replication and repair of damaged DNA. This Porphyromonas gingivalis (strain ATCC 33277 / DSM 20709 / CIP 103683 / JCM 12257 / NCTC 11834 / 2561) protein is DNA ligase.